A 559-amino-acid polypeptide reads, in one-letter code: DNA primase (559 aa).

The CHC2-type zinc finger occupies 37–61 (CPFHEERSASFSVNQIKGFYHCFGC). The Toprim domain maps to 246 to 327 (KQVIVTEGYL…RGGVILFENN (82 aa)). Positions 252, 296, and 298 each coordinate Mg(2+).

This sequence belongs to the DnaG primase family. Monomer. The C-terminal domain DnaB-binding domain exists as a dimer in solution. Interacts with DnaB via its C-terminal domain (residues 415-559 of DnaG); up to 3 DnaG fragments bind to a DnaB hexamer. It depends on Zn(2+) as a cofactor. Mg(2+) serves as cofactor.

The enzyme catalyses ssDNA + n NTP = ssDNA/pppN(pN)n-1 hybrid + (n-1) diphosphate.. In terms of biological role, RNA polymerase that catalyzes the synthesis of short RNA molecules used as primers for DNA polymerase during DNA replication. Stimulates the 5'-3' DNA helicase activity of DnaB. The protein is DNA primase of Helicobacter pylori (strain ATCC 700392 / 26695) (Campylobacter pylori).